A 315-amino-acid polypeptide reads, in one-letter code: Methionyl-tRNA formyltransferase (315 aa).

113-116 (SLLP) contacts (6S)-5,6,7,8-tetrahydrofolate.

It belongs to the Fmt family.

It catalyses the reaction L-methionyl-tRNA(fMet) + (6R)-10-formyltetrahydrofolate = N-formyl-L-methionyl-tRNA(fMet) + (6S)-5,6,7,8-tetrahydrofolate + H(+). Functionally, attaches a formyl group to the free amino group of methionyl-tRNA(fMet). The formyl group appears to play a dual role in the initiator identity of N-formylmethionyl-tRNA by promoting its recognition by IF2 and preventing the misappropriation of this tRNA by the elongation apparatus. In Escherichia coli (strain SMS-3-5 / SECEC), this protein is Methionyl-tRNA formyltransferase.